A 450-amino-acid polypeptide reads, in one-letter code: Bifunctional protein GlmU (450 aa).

Residues 1–236 (MTAHKPFSAV…AWEVSGVNNR (236 aa)) are pyrophosphorylase. UDP-N-acetyl-alpha-D-glucosamine contacts are provided by residues 12–15 (LAAG), lysine 26, glutamine 79, 84–85 (GT), 107–109 (YGD), glycine 147, glutamate 162, asparagine 177, and asparagine 234. Position 109 (aspartate 109) interacts with Mg(2+). Asparagine 234 provides a ligand contact to Mg(2+). Residues 237–257 (AELASLESLWQNRKRQDVMKD) form a linker region. The segment at 258 to 450 (GASLIAPETV…KKFRQRKKKK (193 aa)) is N-acetyltransferase. UDP-N-acetyl-alpha-D-glucosamine contacts are provided by arginine 323 and lysine 341. Catalysis depends on histidine 353, which acts as the Proton acceptor. UDP-N-acetyl-alpha-D-glucosamine contacts are provided by tyrosine 356 and asparagine 367. Acetyl-CoA is bound by residues 376–377 (NY), serine 395, alanine 413, and arginine 430.

The protein in the N-terminal section; belongs to the N-acetylglucosamine-1-phosphate uridyltransferase family. It in the C-terminal section; belongs to the transferase hexapeptide repeat family. Homotrimer. Mg(2+) is required as a cofactor.

It is found in the cytoplasm. The catalysed reaction is alpha-D-glucosamine 1-phosphate + acetyl-CoA = N-acetyl-alpha-D-glucosamine 1-phosphate + CoA + H(+). It catalyses the reaction N-acetyl-alpha-D-glucosamine 1-phosphate + UTP + H(+) = UDP-N-acetyl-alpha-D-glucosamine + diphosphate. Its pathway is nucleotide-sugar biosynthesis; UDP-N-acetyl-alpha-D-glucosamine biosynthesis; N-acetyl-alpha-D-glucosamine 1-phosphate from alpha-D-glucosamine 6-phosphate (route II): step 2/2. The protein operates within nucleotide-sugar biosynthesis; UDP-N-acetyl-alpha-D-glucosamine biosynthesis; UDP-N-acetyl-alpha-D-glucosamine from N-acetyl-alpha-D-glucosamine 1-phosphate: step 1/1. It functions in the pathway bacterial outer membrane biogenesis; LPS lipid A biosynthesis. Functionally, catalyzes the last two sequential reactions in the de novo biosynthetic pathway for UDP-N-acetylglucosamine (UDP-GlcNAc). The C-terminal domain catalyzes the transfer of acetyl group from acetyl coenzyme A to glucosamine-1-phosphate (GlcN-1-P) to produce N-acetylglucosamine-1-phosphate (GlcNAc-1-P), which is converted into UDP-GlcNAc by the transfer of uridine 5-monophosphate (from uridine 5-triphosphate), a reaction catalyzed by the N-terminal domain. The polypeptide is Bifunctional protein GlmU (Zymomonas mobilis subsp. mobilis (strain ATCC 31821 / ZM4 / CP4)).